The sequence spans 212 residues: 2-dehydro-3-deoxy-phosphogluconate aldolase (212 aa).

Catalysis depends on Glu45, which acts as the Proton acceptor. 3 residues coordinate pyruvate: Arg49, Thr73, and Lys133. Lys133 serves as the catalytic Schiff-base intermediate with substrate.

Belongs to the KHG/KDPG aldolase family. As to quaternary structure, homotrimer.

Its subcellular location is the cytoplasm. It carries out the reaction 2-dehydro-3-deoxy-6-phospho-D-gluconate = D-glyceraldehyde 3-phosphate + pyruvate. The protein operates within carbohydrate acid metabolism; 2-dehydro-3-deoxy-D-gluconate degradation; D-glyceraldehyde 3-phosphate and pyruvate from 2-dehydro-3-deoxy-D-gluconate: step 2/2. Its function is as follows. Involved in the degradation of glucose via the Entner-Doudoroff pathway. Catalyzes the reversible, stereospecific retro-aldol cleavage of 2-keto-3-deoxy-6-phosphogluconate (KDPG) to pyruvate and D-glyceraldehyde-3-phosphate. The polypeptide is 2-dehydro-3-deoxy-phosphogluconate aldolase (eda) (Haemophilus influenzae (strain ATCC 51907 / DSM 11121 / KW20 / Rd)).